Reading from the N-terminus, the 89-residue chain is Small cysteine-rich protein 1 (89 aa).

The first 20 residues, 1-20 (MDVRFRLCLFLVILVIVANA), serve as a signal peptide directing secretion. A propeptide spanning residues 21-27 (NVIKEPE) is cleaved from the precursor.

It belongs to the Cnidaria small cysteine-rich protein (SCRiP) family. gamma subfamily. In terms of processing, contains 4 disulfide bonds.

It is found in the secreted. The protein resides in the nematocyst. Functionally, induces neurotoxic symptoms on zebrafish. Has also been claimed to be implied in calcification, but tests on homolog proteins suggest that proteins of this family have a neurotoxic function and not a calcification function. This chain is Small cysteine-rich protein 1, found in Acropora millepora (Staghorn coral).